The sequence spans 961 residues: SH3 domain-binding protein 4 (961 aa).

The SH3 1 domain maps to 55–114 (GNAKEVIAIKDYCPNNFTTLKFSKGDHLYVLDTSGGEWWYAHNTTEMGYIPSSYVQPLNY). 5 positions are modified to phosphoserine: serine 131, serine 244, serine 249, serine 277, and serine 294. Residues 315–452 (TNIVCKLDSS…LEPCMYLAIV (138 aa)) enclose the ZU5 domain. Residue serine 635 is modified to Phosphoserine. The 71-residue stretch at 652-722 (SSLKFGKLLK…HTKNVLVVGK (71 aa)) folds into the SH3 2 domain.

As to quaternary structure, homodimer or homooligomer. Interacts with DNM2, EPS15, clathrin, the adapter protein complex 2/AP-2 and TFRC. Interacts with the Rag GTPases RRAGA, RRAGB, RRAGC and RRAGD; the interaction is most probably direct, preferentially occurs with their inactive GDP-bound form and is negatively regulated by amino acids. Phosphorylated upon EGF stimulation. Phosphorylation prevents interaction with DNM2.

Its subcellular location is the membrane. The protein resides in the clathrin-coated pit. It is found in the cytoplasmic vesicle. The protein localises to the clathrin-coated vesicle. It localises to the nucleus. May function in transferrin receptor internalization at the plasma membrane through a cargo-specific control of clathrin-mediated endocytosis. Alternatively, may act as a negative regulator of the amino acid-induced TOR signaling by inhibiting the formation of active Rag GTPase complexes. Preferentially binds inactive Rag GTPase complexes and prevents their interaction with the mTORC1 complex inhibiting its relocalization to lysosomes and its activation. Thereby, may indirectly regulate cell growth, proliferation and autophagy. This Rattus norvegicus (Rat) protein is SH3 domain-binding protein 4 (Sh3bp4).